The primary structure comprises 315 residues: FGFR1 oncogene partner 2 homolog (315 aa).

Coiled-coil stretches lie at residues 32–99 (EEAE…RAME) and 156–183 (VVQR…ISKQ). Disordered regions lie at residues 201–222 (KAVQ…SGAS) and 238–315 (PEQP…APAT). Positions 246–269 (GTTNSFNTAPVHSQSETQAPSVTL) are enriched in polar residues.

This sequence belongs to the SIKE family.

This chain is FGFR1 oncogene partner 2 homolog, found in Drosophila melanogaster (Fruit fly).